Consider the following 52-residue polypeptide: Large ribosomal subunit protein bL33 (52 aa).

This sequence belongs to the bacterial ribosomal protein bL33 family.

The polypeptide is Large ribosomal subunit protein bL33 (Campylobacter jejuni subsp. jejuni serotype O:6 (strain 81116 / NCTC 11828)).